We begin with the raw amino-acid sequence, 549 residues long: MQNINPTQTNAWKALEQHQKDLDQVTIQQLFEQEPTRFNDYSLKFAEQILVDYSKNNINQQTLSLLRQLAKECALNEATEAMFNGEKINRTENRAVLHTALRSCANTPVYVDGKDVMPEVNAVLAKMKSFCQRVISGDWKGYTGKAITDVVNIGIGGSDLGPYMVTEALRPYKNHLTMHFVSNVDGTHIAETLKKVNPETTLFLVASKTFTTQETMTNAISARKWFLAAAQDESQIANHFAALSTNAKEVEKFGIDTNNMFEFWDWVGGRYSLWSAIGLSIALSIGFDNFEQLLAGAHEMDNHFRTAPMEQNIPATLALIGIWNCNFLGAETEAMLPYDQYLHRFAAYFQQGNMESNGKYVARNGEVINNYQTGPIIWGEPGTNGQHAFYQLIHQGTKIIPCDFIAPAQTHNPLSDHHSKLLSNFFAQTEALAFGKTQQEVEAEFVKAGKSLDEVKEIVPFKVFTGNKPTNSILVQKITPFTLGALIAMYEHKIFVQGVIFNIYSFDQWGVELGKQLANRILPELTGDESISSHDSSTNGLINQFKAWR.

Glutamate 355 (proton donor) is an active-site residue. Catalysis depends on residues histidine 387 and lysine 515.

Belongs to the GPI family.

Its subcellular location is the cytoplasm. It catalyses the reaction alpha-D-glucose 6-phosphate = beta-D-fructose 6-phosphate. The protein operates within carbohydrate biosynthesis; gluconeogenesis. Its pathway is carbohydrate degradation; glycolysis; D-glyceraldehyde 3-phosphate and glycerone phosphate from D-glucose: step 2/4. Its function is as follows. Catalyzes the reversible isomerization of glucose-6-phosphate to fructose-6-phosphate. This is Glucose-6-phosphate isomerase from Histophilus somni (strain 129Pt) (Haemophilus somnus).